The chain runs to 264 residues: FPSVQSNAAAYLQHLCFGDNKIKAEIRRQGGIQLLVDLLDHRMTEVHRSACGALRNLVYGKANDDNKIALKNCGGIPALVRLLRKTTDLEIRELVTGVLWNLSSCDALKMPIIQDALAVLTNAVIIPHSGWENSPLQDDRKIQLHSSQVLRNATGCLRNVSSAGEEARRRMRECDGLTDALLYVIQSALGSSEIDSKTVENCVCILRNLSYRLAAETSQGQHMGTDELDGLLCGEANGKDAESSGCWGKKKKKKKSQDQWDGVG.

ARM repeat units follow at residues 20 to 59 (NKIK…NLVY), 64 to 104 (DDNK…NLSS), 120 to 162 (LTNA…NVSS), and 166 to 211 (EARR…NLSY). Residues 238–264 (GKDAESSGCWGKKKKKKKSQDQWDGVG) form a disordered region.

It belongs to the beta-catenin family. In terms of assembly, binds to E-cadherin at a juxtamembrane site within the cytoplasmic domain. Binds to PSEN1. Interacts with ZBTB33. Interacts with ARHGEF28. Interacts (via the extreme C-terminus) with FRMPD2 (via the PDZ 2 domain). Interacts with PDZD2. Interacts with CDK5. Interacts with CTNBB1. Interacts with GSK3A and GSK3B. Interacts with DNM2. Interacts with CCDC85B. In terms of processing, O-glycosylated. Post-translationally, phosphorylated by CDK5. Phosphorylated by GSK3B. As to expression, predominantly expressed in brain; accumulates in cortical neurons (at protein level).

It is found in the nucleus. The protein resides in the cell junction. Its subcellular location is the adherens junction. It localises to the cell projection. The protein localises to the dendrite. It is found in the perikaryon. Functionally, has a critical role in neuronal development, particularly in the formation and/or maintenance of dendritic spines and synapses. Involved in the regulation of canonical Wnt signaling. It probably acts on beta-catenin turnover, facilitating beta-catenin interaction with GSK3B, phosphorylation, ubiquitination and degradation. May be involved in neuronal cell adhesion and tissue morphogenesis and integrity by regulating adhesion molecules. Functions as a transcriptional activator when bound to ZBTB33. This Rattus norvegicus (Rat) protein is Catenin delta-2 (Ctnnd2).